The sequence spans 584 residues: Endogenous retrovirus group FC1 Env polyprotein (584 aa).

The N-terminal stretch at Met-1–Ser-22 is a signal peptide. Over Asn-23–Trp-518 the chain is Extracellular. N-linked (GlcNAc...) asparagine glycans are attached at residues Asn-69 and Asn-247. The CXXC signature appears at Cys-251–Cys-254. Residues Asn-272, Asn-276, Asn-308, Asn-313, Asn-322, Asn-334, Asn-342, and Asn-346 are each glycosylated (N-linked (GlcNAc...) asparagine). Residues Ala-384–Leu-404 are fusion peptide. The short motif at Met-449–Thr-465 is the CKS-17 element. Cys-466 and Cys-473 form a disulfide bridge. Residues Cys-466–Cys-474 carry the CX6CC motif. Asn-478 is a glycosylation site (N-linked (GlcNAc...) asparagine). A helical transmembrane segment spans residues Ile-519–Val-539. The Cytoplasmic segment spans residues Leu-540–Arg-584.

The protein belongs to the gamma type-C retroviral envelope protein family. HERV class-I F(c)1 env subfamily. The surface (SU) and transmembrane (TM) proteins form a heterodimer. SU and TM are attached by noncovalent interactions or by a labile interchain disulfide bond. Specific enzymatic cleavages in vivo yield the mature SU and TM proteins. In terms of processing, the CXXC motif is highly conserved across a broad range of retroviral envelope proteins. It is thought to participate in the formation of a labile disulfide bond possibly with the CX6CC motif present in the transmembrane protein. As to expression, low expression in skin, testis and trachea.

It is found in the virion. The protein resides in the cell membrane. Retroviral envelope proteins mediate receptor recognition and membrane fusion during early infection. Endogenous envelope proteins may have kept, lost or modified their original function during evolution. This endogenous envelope protein has lost its original fusogenic properties. Its function is as follows. SU mediates receptor recognition. Functionally, TM anchors the envelope heterodimer to the viral membrane through one transmembrane domain. The other hydrophobic domain, called fusion peptide, mediates fusion of the viral membrane with the target cell membrane. This is Endogenous retrovirus group FC1 Env polyprotein (ERVFC1) from Homo sapiens (Human).